Consider the following 432-residue polypeptide: Lipid-A-disaccharide synthase (432 aa).

Polar residues predominate over residues 1–11 (MTGIGNQTSGI). The tract at residues 1-35 (MTGIGNQTSGIETGVHDRAPADGEPTALPISHSPL) is disordered.

Belongs to the LpxB family.

The catalysed reaction is a lipid X + a UDP-2-N,3-O-bis[(3R)-3-hydroxyacyl]-alpha-D-glucosamine = a lipid A disaccharide + UDP + H(+). The protein operates within bacterial outer membrane biogenesis; LPS lipid A biosynthesis. Functionally, condensation of UDP-2,3-diacylglucosamine and 2,3-diacylglucosamine-1-phosphate to form lipid A disaccharide, a precursor of lipid A, a phosphorylated glycolipid that anchors the lipopolysaccharide to the outer membrane of the cell. The polypeptide is Lipid-A-disaccharide synthase (Xanthomonas oryzae pv. oryzae (strain MAFF 311018)).